Here is a 33-residue protein sequence, read N- to C-terminus: Photosystem II reaction center protein Psb30 (33 aa).

A helical transmembrane segment spans residues 5–25 (LIVQLTSLILISIAGPIIIAL).

The protein belongs to the Psb30/Ycf12 family. PSII is composed of 1 copy each of membrane proteins PsbA, PsbB, PsbC, PsbD, PsbE, PsbF, PsbH, PsbI, PsbJ, PsbK, PsbL, PsbM, PsbT, PsbY, PsbZ, Psb30/Ycf12, peripheral proteins of the oxygen-evolving complex and a large number of cofactors. It forms dimeric complexes.

It is found in the plastid. It localises to the chloroplast thylakoid membrane. Functionally, a core subunit of photosystem II (PSII), probably helps stabilize the reaction center. This is Photosystem II reaction center protein Psb30 from Euglena myxocylindracea.